The following is a 318-amino-acid chain: Taste receptor type 2 member 60 (318 aa).

The Extracellular portion of the chain corresponds to 1–7 (MNGDHMV). A helical membrane pass occupies residues 8–28 (LGSSVTDKKAIILVTILLLLR). Residues 29–40 (LVAIAGNGFITA) are Cytoplasmic-facing. The chain crosses the membrane as a helical span at residues 41–61 (ALGVEWVLRRMLLPCDKLLVS). At 62–88 (LGASRFCLQSVVMGKTIYVFLHPMAFP) the chain is on the extracellular side. A helical transmembrane segment spans residues 89 to 109 (YNPVLQFLAFQWDFLNAATLW). Residues 110–128 (SSTWLSVFYCVKIATFTHP) are Cytoplasmic-facing. The helical transmembrane segment at 129–149 (VFFWLKHKLSGWLPWMLFSSV) threads the bilayer. At 150-183 (GLSSFTTILFFIGNHRMYQNYLRNHLQPWNVTGD) the chain is on the extracellular side. Asparagine 179 carries an N-linked (GlcNAc...) asparagine glycan. The helical transmembrane segment at 184–204 (SIRSYCEKFYLFPLKMITWTM) threads the bilayer. At 205 to 234 (PTAVFFICMILLITSLGRHRKKALLTTSGF) the chain is on the cytoplasmic side. The helical transmembrane segment at 235 to 255 (REPSVQAHIKALLALLSFAML) threads the bilayer. The Extracellular segment spans residues 256–264 (FISYFLSLV). The helical transmembrane segment at 265–285 (FSAAGIFPPLDFKFWVWESVI) threads the bilayer. The Cytoplasmic segment spans residues 286 to 318 (YLCAAVHPIILLFSNCRLRAVLKSRRSSRCGTP).

This sequence belongs to the G-protein coupled receptor T2R family. Expressed in subsets of taste receptor cells of the tongue and exclusively in gustducin-positive cells.

The protein localises to the membrane. In terms of biological role, receptor that may play a role in the perception of bitterness and is gustducin-linked. May play a role in sensing the chemical composition of the gastrointestinal content. The activity of this receptor may stimulate alpha gustducin, mediate PLC-beta-2 activation and lead to the gating of TRPM5. This Homo sapiens (Human) protein is Taste receptor type 2 member 60 (TAS2R60).